The primary structure comprises 848 residues: DNA mismatch repair protein MutS (848 aa).

605-612 (GPNMAGKS) is an ATP binding site.

It belongs to the DNA mismatch repair MutS family.

This protein is involved in the repair of mismatches in DNA. It is possible that it carries out the mismatch recognition step. This protein has a weak ATPase activity. This chain is DNA mismatch repair protein MutS, found in Leptospira interrogans serogroup Icterohaemorrhagiae serovar Lai (strain 56601).